We begin with the raw amino-acid sequence, 503 residues long: Cytochrome P450 11B1, mitochondrial (503 aa).

Residues 1–24 constitute a mitochondrion transit peptide; sequence MAIWAKAEAWLAGPWLALNRARTL. Cysteine 450 is a binding site for heme.

This sequence belongs to the cytochrome P450 family. Heme is required as a cofactor.

Its subcellular location is the mitochondrion inner membrane. The catalysed reaction is a steroid + 2 reduced [adrenodoxin] + O2 + 2 H(+) = an 11beta-hydroxysteroid + 2 oxidized [adrenodoxin] + H2O. It catalyses the reaction 11-deoxycortisol + 2 reduced [adrenodoxin] + O2 + 2 H(+) = cortisol + 2 oxidized [adrenodoxin] + H2O. The enzyme catalyses 21-hydroxyprogesterone + 2 reduced [adrenodoxin] + O2 + 2 H(+) = corticosterone + 2 oxidized [adrenodoxin] + H2O. It carries out the reaction corticosterone + 2 reduced [adrenodoxin] + O2 + 2 H(+) = 18-hydroxycorticosterone + 2 oxidized [adrenodoxin] + H2O. The catalysed reaction is 18-hydroxycorticosterone + 2 reduced [adrenodoxin] + O2 + 2 H(+) = aldosterone + 2 oxidized [adrenodoxin] + 2 H2O. It catalyses the reaction 21-hydroxyprogesterone + 2 reduced [adrenodoxin] + O2 + 2 H(+) = 19-hydroxy-11-deoxycorticosterone + 2 oxidized [adrenodoxin] + H2O. The enzyme catalyses 19-hydroxy-11-deoxycorticosterone + 2 reduced [adrenodoxin] + O2 + 2 H(+) = 19-oxo-11-deoxycorticosterone + 2 oxidized [adrenodoxin] + 2 H2O. The protein operates within steroid biosynthesis; glucocorticoid biosynthesis. Its pathway is steroid hormone biosynthesis. In terms of biological role, a cytochrome P450 monooxygenase that catalyzes the biosynthesis of aldosterone and other adrenal corticoids. Differing from other species (such as human, rat and mice), it is able to catalyze three sequential oxidative reactions of 11-deoxycorticosterone (21-hydroxyprogesterone), namely 11-beta hydroxylation, followed by two successive oxidations at C18 yielding 18-hydroxy and then 18-oxo intermediates, and ending with the formation of aldosterone. Steroid 11beta, 18- and 19-hydroxylase. Mechanistically, uses molecular oxygen inserting one oxygen atom into a substrate and reducing the second into a water molecule. Two electrons are provided by NADPH via a two-protein mitochondrial transfer system comprising flavoprotein FDXR (adrenodoxin/ferredoxin reductase) and nonheme iron-sulfur protein FDX1 or FDX2 (adrenodoxin/ferredoxin). This is Cytochrome P450 11B1, mitochondrial (CYP11B1) from Sus scrofa (Pig).